Here is a 284-residue protein sequence, read N- to C-terminus: 2-dehydro-3-deoxyphosphooctonate aldolase (284 aa).

It belongs to the KdsA family.

It localises to the cytoplasm. It carries out the reaction D-arabinose 5-phosphate + phosphoenolpyruvate + H2O = 3-deoxy-alpha-D-manno-2-octulosonate-8-phosphate + phosphate. The protein operates within carbohydrate biosynthesis; 3-deoxy-D-manno-octulosonate biosynthesis; 3-deoxy-D-manno-octulosonate from D-ribulose 5-phosphate: step 2/3. Its pathway is bacterial outer membrane biogenesis; lipopolysaccharide biosynthesis. This Bordetella petrii (strain ATCC BAA-461 / DSM 12804 / CCUG 43448) protein is 2-dehydro-3-deoxyphosphooctonate aldolase.